Reading from the N-terminus, the 264-residue chain is MKEYLDLLNLILKNGYPKIDRTKTGTLSMFGYQIRINLNEGFPLLTTKYCHFKSIVYELLWFLRGDTNISFLKKNNISIWNKWADKNGNLGPIYGKQWRAWEDKKNNTIDQIEIALNKLKKEPSSRRILVSSWNVGELDLMSIPPCHVLFQLYVINNKLSCQVYQRSCDIFLGLPFNIGSYALLTHIFANQCDLLVEDLIWTGGDIHLYKNHLNQAKLQLTRSPLPLPKIFIKKKPKNLFNYAFNDFLLIDYNHHPKIKAPISI.

Arginine 21 serves as a coordination point for dUMP. (6R)-5,10-methylene-5,6,7,8-tetrahydrofolate is bound at residue histidine 51. 126 to 127 serves as a coordination point for dUMP; the sequence is RR. Residue cysteine 146 is the Nucleophile of the active site. Residues 166–169, asparagine 177, and 207–209 contribute to the dUMP site; these read RSCD and HLY. Aspartate 169 is a binding site for (6R)-5,10-methylene-5,6,7,8-tetrahydrofolate. (6R)-5,10-methylene-5,6,7,8-tetrahydrofolate is bound at residue serine 263.

Belongs to the thymidylate synthase family. Bacterial-type ThyA subfamily. Homodimer.

The protein resides in the cytoplasm. It carries out the reaction dUMP + (6R)-5,10-methylene-5,6,7,8-tetrahydrofolate = 7,8-dihydrofolate + dTMP. The protein operates within pyrimidine metabolism; dTTP biosynthesis. In terms of biological role, catalyzes the reductive methylation of 2'-deoxyuridine-5'-monophosphate (dUMP) to 2'-deoxythymidine-5'-monophosphate (dTMP) while utilizing 5,10-methylenetetrahydrofolate (mTHF) as the methyl donor and reductant in the reaction, yielding dihydrofolate (DHF) as a by-product. This enzymatic reaction provides an intracellular de novo source of dTMP, an essential precursor for DNA biosynthesis. The sequence is that of Thymidylate synthase from Wigglesworthia glossinidia brevipalpis.